Consider the following 156-residue polypeptide: Small ribosomal subunit protein uS7 (156 aa).

It belongs to the universal ribosomal protein uS7 family. Part of the 30S ribosomal subunit. Contacts proteins S9 and S11.

In terms of biological role, one of the primary rRNA binding proteins, it binds directly to 16S rRNA where it nucleates assembly of the head domain of the 30S subunit. Is located at the subunit interface close to the decoding center, probably blocks exit of the E-site tRNA. The polypeptide is Small ribosomal subunit protein uS7 (Shewanella sp. (strain ANA-3)).